A 235-amino-acid polypeptide reads, in one-letter code: MAMFFKKNDDRMFPIEGAPRRKRTNFFTFPSLQKLHQNAKLNDGDNDEVFSPEPSSGESIDLDISPLTPPDGSDDYSDVEDGGAEEGDSDPPIKPVRAARLGERCCAGLKRTSSTSTASTSSGSNDGGDCNYYAPPAKKPAPIHGNPLGGKRRPELDLSPKIENRSDSSSRESTTSSDSWDYVNNKDNPSRGQGNENPSASDSLGALQAACIHQDHAMPTTPPVKGGEDYPWPWN.

Residues 37–235 (QNAKLNDGDN…GGEDYPWPWN (199 aa)) are disordered. Positions 72 to 89 (GSDDYSDVEDGGAEEGDS) are enriched in acidic residues. Low complexity predominate over residues 112-124 (TSSTSTASTSSGS). Residues 152-170 (RRPELDLSPKIENRSDSSS) show a composition bias toward basic and acidic residues. Polar residues predominate over residues 185–202 (NKDNPSRGQGNENPSASD).

The protein belongs to the herpesviridae BKRF4 family.

This is an uncharacterized protein from Alcelaphine herpesvirus 1 (strain C500) (AlHV-1).